A 472-amino-acid polypeptide reads, in one-letter code: Ribosomal protein uS12 methylthiotransferase RimO (472 aa).

Positions 1-114 constitute an MTTase N-terminal domain; the sequence is MKFHIITLGC…IGDVVDTLQR (114 aa). [4Fe-4S] cluster contacts are provided by Cys-10, Cys-46, Cys-78, Cys-171, Cys-175, and Cys-178. Residues 157-388 enclose the Radical SAM core domain; that stretch reads RITGPSAYLK…MRLQQGISRQ (232 aa). The TRAM domain maps to 391–460; the sequence is RRWVGRVIRV…DYDLWGEMVE (70 aa).

The protein belongs to the methylthiotransferase family. RimO subfamily. The cofactor is [4Fe-4S] cluster.

It localises to the cytoplasm. The catalysed reaction is L-aspartate(89)-[ribosomal protein uS12]-hydrogen + (sulfur carrier)-SH + AH2 + 2 S-adenosyl-L-methionine = 3-methylsulfanyl-L-aspartate(89)-[ribosomal protein uS12]-hydrogen + (sulfur carrier)-H + 5'-deoxyadenosine + L-methionine + A + S-adenosyl-L-homocysteine + 2 H(+). Catalyzes the methylthiolation of an aspartic acid residue of ribosomal protein uS12. This is Ribosomal protein uS12 methylthiotransferase RimO from Roseiflexus sp. (strain RS-1).